The sequence spans 488 residues: MEADEVSIREQNFHSQVREYTICFLLFAVLYIVSYFIITRYKRKADEQEDEDAIVNRISLFLSTFTLAVSAGAVLLLPFSIISNEILLSFPQNYYIQWLNGSLIHGLWNLASLFSNLCLFVLMPFAFFFLESEGFAGLKKGIRARILETLVMLILLALLILGIVWVASALIDNDAASMESLYDLWEFYLPYLYSCISLMGCLLLLLCTPVGLSRMFTVMGQLLVKPTILEDLDEQMYIITLEEEAIQRKLNGISSTLENQTVELERELEKVKCKKTNLERRKKASAWERNLVYPAVMILLLIETSISVLLVAFNILYLLVDETAMPKGSGGPGIGNASLSTFGFVGAALEIILIFYLMVSSVVGFYSLRFFENFIPRKDDTTMTKIIGNCVSILVLSSALPVMSRTLGITRFDLLGDFGRFNWLGNFYIVLSYNLLFAIMTTLCLVRKFTSAVREELLKALGLDKLHLSNNPRDSETKPSANGHQKTL.

At 1–18 (MEADEVSIREQNFHSQVR) the chain is on the extracellular side. A helical membrane pass occupies residues 19–39 (EYTICFLLFAVLYIVSYFIIT). The Cytoplasmic portion of the chain corresponds to 40–61 (RYKRKADEQEDEDAIVNRISLF). Residues 62–82 (LSTFTLAVSAGAVLLLPFSII) traverse the membrane as a helical segment. The Extracellular segment spans residues 83–109 (SNEILLSFPQNYYIQWLNGSLIHGLWN). Residues 110–130 (LASLFSNLCLFVLMPFAFFFL) traverse the membrane as a helical segment. The Cytoplasmic portion of the chain corresponds to 131-150 (ESEGFAGLKKGIRARILETL). A helical membrane pass occupies residues 151–171 (VMLILLALLILGIVWVASALI). Over 172 to 186 (DNDAASMESLYDLWE) the chain is Extracellular. Residues 187–207 (FYLPYLYSCISLMGCLLLLLC) traverse the membrane as a helical segment. Residues 208-295 (TPVGLSRMFT…AWERNLVYPA (88 aa)) lie on the Cytoplasmic side of the membrane. The stretch at 246-286 (IQRKLNGISSTLENQTVELERELEKVKCKKTNLERRKKASA) forms a coiled coil. A helical transmembrane segment spans residues 296 to 316 (VMILLLIETSISVLLVAFNIL). The Extracellular segment spans residues 317–338 (YLLVDETAMPKGSGGPGIGNAS). The chain crosses the membrane as a helical span at residues 339-359 (LSTFGFVGAALEIILIFYLMV). The Cytoplasmic segment spans residues 360 to 382 (SSVVGFYSLRFFENFIPRKDDTT). A helical transmembrane segment spans residues 383 to 403 (MTKIIGNCVSILVLSSALPVM). Over 404–425 (SRTLGITRFDLLGDFGRFNWLG) the chain is Extracellular. Residues 426 to 446 (NFYIVLSYNLLFAIMTTLCLV) form a helical membrane-spanning segment. Residues 447-488 (RKFTSAVREELLKALGLDKLHLSNNPRDSETKPSANGHQKTL) lie on the Cytoplasmic side of the membrane.

Belongs to the LIMR family. In terms of tissue distribution, detected ubiquitously at low levels throughout the developing embryo. Present initially in the limb mesoderm as the limb bud emerges from the body wall and up-regulated along the posterior margin of the developing limb bud with progression of the limb outgrowth. Higher levels are detected in limb buds, otic vesicles and pharyngeal arches. Isoform 1 is detected in lung, spleen, heart, breast muscle, cartilage and liver of the adult tissues. Isoform 3 is detected in adult lung, spleen, heart and breast muscle but not detected in cartilage and liver.

It localises to the membrane. In terms of biological role, putative membrane receptor. The protein is Limb region 1 protein homolog (LMBR1) of Gallus gallus (Chicken).